The chain runs to 234 residues: MKHLPIIALDFPSGQEALAFLEPFEGTPLFVKVGMELFYQEGPVILEALKEKNCRIFLDLKLHDIPTTVKKAMNRLAVLGVDLVNVHAAGGKQMMQAALEGLESGTPAGQKRPDIIAVTQLTSTSEDMMRSELLIDRSLQETVIRYGQLAYESGLDGVVCSVHESKALHEHISPDFLTVTPGIRLLNDQTDDQKRVATPAYAKEQGVSQIVVGRSITKADKPLEAYHQILKEWE.

Substrate-binding positions include D10, K32, 59 to 68 (DLKLHDIPTT), T122, R184, Q193, G213, and R214. Catalysis depends on K61, which acts as the Proton donor.

This sequence belongs to the OMP decarboxylase family. Type 1 subfamily. In terms of assembly, homodimer.

It carries out the reaction orotidine 5'-phosphate + H(+) = UMP + CO2. It functions in the pathway pyrimidine metabolism; UMP biosynthesis via de novo pathway; UMP from orotate: step 2/2. Functionally, catalyzes the decarboxylation of orotidine 5'-monophosphate (OMP) to uridine 5'-monophosphate (UMP). This Bacillus pumilus (strain SAFR-032) protein is Orotidine 5'-phosphate decarboxylase.